We begin with the raw amino-acid sequence, 507 residues long: WD-40 repeat-containing protein MSI4 (507 aa).

Residue methionine 1 is modified to N-acetylmethionine. The disordered stretch occupies residues 1 to 66; the sequence is MESDEAAAVS…KTQQSPSVDE (66 aa). WD repeat units lie at residues 95-137, 162-202, and 217-257; these read RWGP…KPRV, IHPG…NRHA, and GHQD…TTIG. Residues 258–272 show a composition bias toward polar residues; it reads TDSKSSGSIIKQTGE. The segment at 258–282 is disordered; that stretch reads TDSKSSGSIIKQTGEGTDKNESPTV. WD repeat units follow at residues 290–330, 335–375, 384–424, and 439–486; these read GHED…NPVT, AHDA…ANGV, GHKA…KKSD, and GHRD…YRPE. The DWD box motif lies at 308–323; sequence FCSVGDDSCLILWDAR.

It belongs to the WD repeat RBAP46/RBAP48/MSI1 family. Interacts with AHL16 and HOS1. Interacts with LHP1, PDP1, PDP2 and PDP3. Component of the PRC2 (polycomb repressive complex 2) complex which regulates histone methylation on histone H3K27. In terms of tissue distribution, expressed in rosette leaves, cauline leaves, main stems and developing fruits. Expressed at higher levels in roots and flowers.

It is found in the nucleus. In terms of biological role, core histone-binding subunit that may target chromatin assembly factors, chromatin remodeling factors and histone deacetylases to their histone substrates in a manner that is regulated by nucleosomal DNA. Component of the flowering autonomous pathway which positively regulates flowering by promoting transcriptional repression of the flowering repressor FLC. May promote histone deacetylation at the FLC locus leading to the formation of repressive chromatin structures. Forms a histone deacetylase complex with HDA5, HDA6 and FLD that represses FLC gene expression to control flowering time. Also negatively regulates cold-responsive genes. Acts together with PDP1 and MSI5 to regulate the function of the PRC2 complex on FLC. Required for systemic acquired resistance (SAR) toward pathogenic bacteria (e.g. Pseudomonas syringae pv tomato DC3000 (avrPto)). Together with FLD and MSI4/FVE, contributes to dehydroabietinal-dependent (DA, a diterpenoid tricyclic diterpene) activation of flowering ans SAR. In Arabidopsis thaliana (Mouse-ear cress), this protein is WD-40 repeat-containing protein MSI4.